Reading from the N-terminus, the 297-residue chain is Phosphatidylinositol N-acetylglucosaminyltransferase subunit C (297 aa).

The next 4 helical transmembrane spans lie at 67–87, 88–108, 153–173, and 239–259; these read VFVV…WLFG, TGLA…GGDG, SVFM…AAIV, and AFGG…LLLF.

It belongs to the PIGC family. In terms of assembly, component of the glycosylphosphatidylinositol-N-acetylglucosaminyltransferase (GPI-GnT) complex composed at least by PIGA, PIGC, PIGH, PIGP, PIGQ, PIGY and DPM2. Interacts with PIGQ. Interacts with the heterodimer PIGA:PIGH.

It localises to the endoplasmic reticulum membrane. It functions in the pathway glycolipid biosynthesis; glycosylphosphatidylinositol-anchor biosynthesis. Functionally, part of the glycosylphosphatidylinositol-N-acetylglucosaminyltransferase (GPI-GnT) complex that catalyzes the transfer of N-acetylglucosamine from UDP-N-acetylglucosamine to phosphatidylinositol and participates in the first step of GPI biosynthesis. The protein is Phosphatidylinositol N-acetylglucosaminyltransferase subunit C of Rattus norvegicus (Rat).